Consider the following 199-residue polypeptide: Protein-methionine-sulfoxide reductase heme-binding subunit MsrQ (199 aa).

The next 5 membrane-spanning stretches (helical) occupy residues 13–33 (VLLHLAGFLPLLWLILSVDQG), 79–99 (LLGLWCFFWATLHLVSYALLE), 120–140 (LGIISWLILLALAVTSPQIMM), 147–167 (WQKLHNFVYLVAILTPIHYLW), and 169–189 (VKTLSPQPILYALAALILLLL).

Belongs to the MsrQ family. As to quaternary structure, heterodimer of a catalytic subunit (MsrP) and a heme-binding subunit (MsrQ). FMN serves as cofactor. Requires heme b as cofactor.

It is found in the cell inner membrane. Functionally, part of the MsrPQ system that repairs oxidized periplasmic proteins containing methionine sulfoxide residues (Met-O), using respiratory chain electrons. Thus protects these proteins from oxidative-stress damage caused by reactive species of oxygen and chlorine generated by the host defense mechanisms. MsrPQ is essential for the maintenance of envelope integrity under bleach stress, rescuing a wide series of structurally unrelated periplasmic proteins from methionine oxidation. MsrQ provides electrons for reduction to the reductase catalytic subunit MsrP, using the quinone pool of the respiratory chain. The chain is Protein-methionine-sulfoxide reductase heme-binding subunit MsrQ from Pectobacterium atrosepticum (strain SCRI 1043 / ATCC BAA-672) (Erwinia carotovora subsp. atroseptica).